The chain runs to 396 residues: Phosphoglycerate kinase (396 aa).

Residues 21 to 23 (DIN), Arg-36, 59 to 62 (HFGR), Arg-118, and Arg-151 contribute to the substrate site. Residues Lys-201, Glu-323, and 353–356 (GGDT) each bind ATP.

This sequence belongs to the phosphoglycerate kinase family. Monomer.

It localises to the cytoplasm. The catalysed reaction is (2R)-3-phosphoglycerate + ATP = (2R)-3-phospho-glyceroyl phosphate + ADP. The protein operates within carbohydrate degradation; glycolysis; pyruvate from D-glyceraldehyde 3-phosphate: step 2/5. The sequence is that of Phosphoglycerate kinase from Ruegeria sp. (strain TM1040) (Silicibacter sp.).